Consider the following 571-residue polypeptide: Potassium-transporting ATPase potassium-binding subunit (571 aa).

Transmembrane regions (helical) follow at residues 5–25 (GWTQITLYGAVVLALVKPLGW), 64–84 (LGYAGALLLFHVFGFLVLYAI), 136–156 (GLTHQNFLSAATGIAVAVALI), 178–198 (ILYVLLPICILYTLFLVWQGI), 254–274 (LSNFVQMVSIFAIGAALTNVF), 285–305 (WAILAAMGALFLAGVAVAYWA), 330–350 (FDIAASALFAVVTTAASCGAV), 357–379 (FTALGGMIPLVNMQLGEVIIGGV), 421–441 (MLGILCLPLMMLGFTALATVL), 488–508 (LAVGMLVGRFFVIIPALAIAG), and 527–547 (GALFVGLLVGVILIIGGLTFF).

This sequence belongs to the KdpA family. As to quaternary structure, the system is composed of three essential subunits: KdpA, KdpB and KdpC.

The protein resides in the cell inner membrane. Part of the high-affinity ATP-driven potassium transport (or Kdp) system, which catalyzes the hydrolysis of ATP coupled with the electrogenic transport of potassium into the cytoplasm. This subunit binds the periplasmic potassium ions and delivers the ions to the membrane domain of KdpB through an intramembrane tunnel. The polypeptide is Potassium-transporting ATPase potassium-binding subunit (Methylobacterium nodulans (strain LMG 21967 / CNCM I-2342 / ORS 2060)).